Here is a 143-residue protein sequence, read N- to C-terminus: MNLNTKYHGCIEYEEKDVIYFEKGIPGFEELKKFIIFPVEDNDVFSVFHSIEKEDMGIIVISPFNIEKDYEIQLEEEQRKKLELQNEKDALVLNTVTLNSDIDKITVNLRAPIIINIKEKIGEQIIINSDKYKVKHPLFKEEA.

This sequence belongs to the FliW family. Interacts with translational regulator CsrA and flagellin(s).

The protein resides in the cytoplasm. Its function is as follows. Acts as an anti-CsrA protein, binds CsrA and prevents it from repressing translation of its target genes, one of which is flagellin. Binds to flagellin and participates in the assembly of the flagellum. This is Flagellar assembly factor FliW from Clostridium botulinum (strain Okra / Type B1).